Consider the following 595-residue polypeptide: Elongation factor 4 (595 aa).

Residues 2 to 183 enclose the tr-type G domain; the sequence is KNIRNFCIIA…AIIERISPPT (182 aa). GTP-binding positions include 14–19 and 130–133; these read DHGKST and NKID.

This sequence belongs to the TRAFAC class translation factor GTPase superfamily. Classic translation factor GTPase family. LepA subfamily.

It is found in the cell inner membrane. It carries out the reaction GTP + H2O = GDP + phosphate + H(+). Functionally, required for accurate and efficient protein synthesis under certain stress conditions. May act as a fidelity factor of the translation reaction, by catalyzing a one-codon backward translocation of tRNAs on improperly translocated ribosomes. Back-translocation proceeds from a post-translocation (POST) complex to a pre-translocation (PRE) complex, thus giving elongation factor G a second chance to translocate the tRNAs correctly. Binds to ribosomes in a GTP-dependent manner. The chain is Elongation factor 4 from Amoebophilus asiaticus (strain 5a2).